We begin with the raw amino-acid sequence, 281 residues long: Acetyl-coenzyme A carboxylase carboxyl transferase subunit beta (281 aa).

Positions 24–281 constitute a CoA carboxyltransferase N-terminal domain; sequence GLWYKSPKGK…TKLLTMLANN (258 aa).

This sequence belongs to the AccD/PCCB family. In terms of assembly, acetyl-CoA carboxylase is a heterohexamer composed of biotin carboxyl carrier protein (AccB), biotin carboxylase (AccC) and two subunits each of ACCase subunit alpha (AccA) and ACCase subunit beta (AccD).

It is found in the cytoplasm. It catalyses the reaction N(6)-carboxybiotinyl-L-lysyl-[protein] + acetyl-CoA = N(6)-biotinyl-L-lysyl-[protein] + malonyl-CoA. Its pathway is lipid metabolism; malonyl-CoA biosynthesis; malonyl-CoA from acetyl-CoA: step 1/1. Its function is as follows. Component of the acetyl coenzyme A carboxylase (ACC) complex. Biotin carboxylase (BC) catalyzes the carboxylation of biotin on its carrier protein (BCCP) and then the CO(2) group is transferred by the transcarboxylase to acetyl-CoA to form malonyl-CoA. The polypeptide is Acetyl-coenzyme A carboxylase carboxyl transferase subunit beta (Amoebophilus asiaticus (strain 5a2)).